Reading from the N-terminus, the 343-residue chain is Phenylalanine--tRNA ligase alpha subunit (343 aa).

Glu-268 is a Mg(2+) binding site.

The protein belongs to the class-II aminoacyl-tRNA synthetase family. Phe-tRNA synthetase alpha subunit type 1 subfamily. Tetramer of two alpha and two beta subunits. It depends on Mg(2+) as a cofactor.

The protein resides in the cytoplasm. The enzyme catalyses tRNA(Phe) + L-phenylalanine + ATP = L-phenylalanyl-tRNA(Phe) + AMP + diphosphate + H(+). The sequence is that of Phenylalanine--tRNA ligase alpha subunit from Cupriavidus necator (strain ATCC 17699 / DSM 428 / KCTC 22496 / NCIMB 10442 / H16 / Stanier 337) (Ralstonia eutropha).